A 526-amino-acid chain; its full sequence is Transcription factor MYC1 (526 aa).

Residues 330–351 form a disordered region; the sequence is MFPSQNSGLNQDDPSDRRKENE. Positions 332 to 341 are enriched in polar residues; sequence PSQNSGLNQD. The bHLH domain occupies 333-382; the sequence is SQNSGLNQDDPSDRRKENEKFSVLRTMVPTVNEVDKESILNNTIKYLQEL.

Homodimer. Interacts with MYB75/PAP1, MYB90/PAP2, MYB4, MYB5, MYB6, MYB23, MYB82, MYB113, MYB114, TT2, MYB0/GL1, and MYB66/WER. As to expression, mostly expressed in developing seeds. Also detected in stems and leaves.

The protein resides in the nucleus. Trancsription activator, when associated with MYB75/PAP1 or MYB90/PAP2. This Arabidopsis thaliana (Mouse-ear cress) protein is Transcription factor MYC1 (BHLH12).